A 219-amino-acid chain; its full sequence is Deoxyribose-phosphate aldolase (219 aa).

Catalysis depends on D89, which acts as the Proton donor/acceptor. K151 (schiff-base intermediate with acetaldehyde) is an active-site residue. K180 serves as the catalytic Proton donor/acceptor.

This sequence belongs to the DeoC/FbaB aldolase family. DeoC type 1 subfamily.

It is found in the cytoplasm. The enzyme catalyses 2-deoxy-D-ribose 5-phosphate = D-glyceraldehyde 3-phosphate + acetaldehyde. Its pathway is carbohydrate degradation; 2-deoxy-D-ribose 1-phosphate degradation; D-glyceraldehyde 3-phosphate and acetaldehyde from 2-deoxy-alpha-D-ribose 1-phosphate: step 2/2. Functionally, catalyzes a reversible aldol reaction between acetaldehyde and D-glyceraldehyde 3-phosphate to generate 2-deoxy-D-ribose 5-phosphate. This Coprothermobacter proteolyticus (strain ATCC 35245 / DSM 5265 / OCM 4 / BT) protein is Deoxyribose-phosphate aldolase.